Reading from the N-terminus, the 594-residue chain is NADH-quinone oxidoreductase subunit C/D (594 aa).

The NADH dehydrogenase I subunit C stretch occupies residues 1–185 (MTTGSALYIP…DPFSLNLAKQ (185 aa)). Residues 209-594 (DYMFLNLGPN…IDFVMADVDR (386 aa)) are NADH dehydrogenase I subunit D.

This sequence in the N-terminal section; belongs to the complex I 30 kDa subunit family. The protein in the C-terminal section; belongs to the complex I 49 kDa subunit family. In terms of assembly, NDH-1 is composed of 13 different subunits. Subunits NuoB, CD, E, F, and G constitute the peripheral sector of the complex.

The protein localises to the cell inner membrane. The catalysed reaction is a quinone + NADH + 5 H(+)(in) = a quinol + NAD(+) + 4 H(+)(out). Its function is as follows. NDH-1 shuttles electrons from NADH, via FMN and iron-sulfur (Fe-S) centers, to quinones in the respiratory chain. The immediate electron acceptor for the enzyme in this species is believed to be ubiquinone. Couples the redox reaction to proton translocation (for every two electrons transferred, four hydrogen ions are translocated across the cytoplasmic membrane), and thus conserves the redox energy in a proton gradient. This chain is NADH-quinone oxidoreductase subunit C/D, found in Pseudomonas fluorescens (strain Pf0-1).